The following is a 123-amino-acid chain: U11/U12 small nuclear ribonucleoprotein 25 kDa protein (123 aa).

The Ubiquitin-like domain maps to Met-32–Lys-123.

As to quaternary structure, component of the U11/U12 snRNPs that are part of the U12-type spliceosome.

The protein localises to the nucleus. The protein is U11/U12 small nuclear ribonucleoprotein 25 kDa protein (Snrnp25) of Mus musculus (Mouse).